We begin with the raw amino-acid sequence, 194 residues long: WASH complex subunit 3 (194 aa).

Methionine 1 is modified (N-acetylmethionine). Residues alanine 46–serine 74 are a coiled coil. 2 disordered regions span residues valine 94–asparagine 126 and serine 158–aspartate 194. The span at serine 98–glutamine 113 shows a compositional bias: low complexity. Over residues aspartate 114 to asparagine 126 the composition is skewed to polar residues.

It belongs to the CCDC53 family. In terms of assembly, component of the WASH core complex also described as WASH regulatory complex (SHRC) composed of WASHC1, WASHC2, WASHC3, WASHC4 and WASHC5. The WASH core complex associates via WASHC2 with the F-actin-capping protein dimer (formed by CAPZA1, CAPZA2 or CAPZA3 and CAPZB) in a transient or substoichiometric manner which was initially described as WASH complex.

The protein localises to the early endosome. In terms of biological role, acts as a component of the WASH core complex that functions as a nucleation-promoting factor (NPF) at the surface of endosomes, where it recruits and activates the Arp2/3 complex to induce actin polymerization, playing a key role in the fission of tubules that serve as transport intermediates during endosome sortingg. The chain is WASH complex subunit 3 from Mus musculus (Mouse).